A 1345-amino-acid polypeptide reads, in one-letter code: MVYSYSEKKRIRKDFGKRPQVLDIPYLLSIQLDSFKKFTDQDPTGERGLEAAFRSVFPIKSFSGNSELQYVSYKLGEPVFDVKECQIRGVTYSAPLRVKLRMVLYDREAAAGTVKDIKEQEVYMGDIPLMTDNGTFVINGTERVIVSQLHRSPGVFFDHDRGKTHSSGKVLYNARIIPYRGSWLDFEFDPKDALFVRIDRRRKLPATIILRALEYSTQEILDLFFERVEFKIKKDTLVMTLVPERLRGETASYDIKDAEGSVLVEAGRRITARHIRQLEKTNTTELEVPVEYIVGKYAAQDYIDPDTGEVLVSANSEISLEDLAKLSLAGIKELSTLYINELDHGAYISDTLRIDPTTNRLEALVEIYRMMRPGEPPTKDAAEALFQNLFFSEERYDLSKVGRMKFNRRLSIPDDEGSGVLSKEDIVAVMKNIIHIRNGFDEVDDIDHLGNRRIRSVGEMAENQFRVGLVRVERAVRERLSLGDLNELMPQDLINAKPISAAVKEFFGSSQLSQFMDQNNPLSEVTHKRRISALGPGGLTRERAGFEVRDVHPTHYGRLCPIETPEGPNIGLINSLASFARTNSYGFLETPYRKVVDGVITDDVEYLSAIEEGRYVIAQANIEVDSQGRMVEEQIACRHKGESTFMRASDIQYMDVSPQQIISVAASLIPFLEHDDANRALMGANMQRQAVPTLKSEKPLVGTGIERTLAVDSGVVVAAKRGGVIDYVDASRIVVKVNEDELRPGEAGIDIYNLTKYTRSNQNTCINQRPCCSVGEPVVRGDVLADGPSTDLGDLALGQNMRIAFMPWNGYNFEDSILISERVAQEDRFTTIHIQELSCIARDTKLGSEEITADIPNVGESALSKLDESGIVYIGAEVKGGDILVGKVTPKGETQLTPEEKLLRAIFGEKASDVKDSSLRVPNSVKGTIIDVQVFTRDGVEKDKRAIEIEEMHIAQARKDLGEEFKILEEGVLSRARNLLLSAGFTEAQIAALPRKDVLVQVIDDETKQTELEQLAEQHEELKADFDKKFEIKRRKITQGDDLAPGVLKIVKVYLAVKRTIQPGDKMAGRHGNKGVISKINPIEDMPYDEQGNPVDIVLNPLGVPSRMNIGQVLEVHLGAAAKGIGNKIAAMLEDQREKGLAEVRSYIKQVYELGDEVQQRVDIDSFTDDELLRLANNLKGGIPVATPAFDGAKEKEIKQMLELAGLPTSGQLKLFDGRTGNEFERPVTVGYMYMLKLNHLVDDKMHARSTGSYSLVTQQPLGGKAQFGGQRFGEMEVWALEAYGAAYTLQEMLTVKSDDVNGRTQMYKNIVDGNHQMQPGMPESFNVLLKEIRSLGINIELDQE.

This sequence belongs to the RNA polymerase beta chain family. As to quaternary structure, the RNAP catalytic core consists of 2 alpha, 1 beta, 1 beta' and 1 omega subunit. When a sigma factor is associated with the core the holoenzyme is formed, which can initiate transcription.

It catalyses the reaction RNA(n) + a ribonucleoside 5'-triphosphate = RNA(n+1) + diphosphate. DNA-dependent RNA polymerase catalyzes the transcription of DNA into RNA using the four ribonucleoside triphosphates as substrates. The polypeptide is DNA-directed RNA polymerase subunit beta (Shewanella sp. (strain MR-4)).